A 163-amino-acid chain; its full sequence is NADH-quinone oxidoreductase subunit I (163 aa).

4Fe-4S ferredoxin-type domains lie at 53–83 (LRRYPNGEERCIACKLCEAICPAQAITIEAG) and 94–123 (VRYDIDMVKCIYCGFCQEACPVEAIVEGPN). Residues Cys-63, Cys-66, Cys-69, Cys-73, Cys-103, Cys-106, Cys-109, and Cys-113 each coordinate [4Fe-4S] cluster.

Belongs to the complex I 23 kDa subunit family. NDH-1 is composed of 14 different subunits. Subunits NuoA, H, J, K, L, M, N constitute the membrane sector of the complex. [4Fe-4S] cluster serves as cofactor.

It localises to the cell inner membrane. The catalysed reaction is a quinone + NADH + 5 H(+)(in) = a quinol + NAD(+) + 4 H(+)(out). NDH-1 shuttles electrons from NADH, via FMN and iron-sulfur (Fe-S) centers, to quinones in the respiratory chain. The immediate electron acceptor for the enzyme in this species is believed to be ubiquinone. Couples the redox reaction to proton translocation (for every two electrons transferred, four hydrogen ions are translocated across the cytoplasmic membrane), and thus conserves the redox energy in a proton gradient. This is NADH-quinone oxidoreductase subunit I from Bartonella quintana (strain Toulouse) (Rochalimaea quintana).